Consider the following 464-residue polypeptide: ESX-1 secretion system protein EccE1 (464 aa).

Transmembrane regions (helical) follow at residues 11-31 and 34-54; these read FTTG…AICM and DLLW…VLTI.

It belongs to the EccE family. Part of the ESX-1 / type VII secretion system (T7SS), which is composed of cytosolic and membrane components. The ESX-1 membrane complex is composed of EccB1, EccCa1, EccCb1, EccD1 and EccE1.

The protein localises to the cell inner membrane. Part of the ESX-1 / type VII specialized secretion system (T7SS), which exports several proteins including EsxA and EsxB. Plays a role in DNA conjugation, in at least a donor strain. The protein is ESX-1 secretion system protein EccE1 of Mycolicibacterium smegmatis (strain ATCC 700084 / mc(2)155) (Mycobacterium smegmatis).